A 309-amino-acid chain; its full sequence is DnaJ-like protein MG002 homolog (309 aa).

The region spanning 1 to 66 is the J domain; the sequence is MTLYDLLELP…KAEYDAMLRF (66 aa).

This chain is DnaJ-like protein MG002 homolog, found in Mycoplasma pneumoniae (strain ATCC 29342 / M129 / Subtype 1) (Mycoplasmoides pneumoniae).